Reading from the N-terminus, the 82-residue chain is Small ribosomal subunit protein bS16 (82 aa).

Belongs to the bacterial ribosomal protein bS16 family.

This Aeromonas hydrophila subsp. hydrophila (strain ATCC 7966 / DSM 30187 / BCRC 13018 / CCUG 14551 / JCM 1027 / KCTC 2358 / NCIMB 9240 / NCTC 8049) protein is Small ribosomal subunit protein bS16.